We begin with the raw amino-acid sequence, 309 residues long: Probable lipid kinase YegS-like (309 aa).

Residues 1-134 enclose the DAGKc domain; sequence MAPSHWRLIL…IDLLRIDADH (134 aa). ATP-binding positions include T39, 65-71, and T96; that span reads GDGTLSE. L219, D222, and L224 together coordinate Mg(2+). The active-site Proton acceptor is E280.

It belongs to the diacylglycerol/lipid kinase family. YegS lipid kinase subfamily. The cofactor is Mg(2+). Requires Ca(2+) as cofactor.

It is found in the cytoplasm. Functionally, probably phosphorylates lipids; the in vivo substrate is unknown. The sequence is that of Probable lipid kinase YegS-like from Xanthomonas campestris pv. campestris (strain 8004).